The chain runs to 535 residues: Probable cytochrome P450 12b2, mitochondrial (535 aa).

Cys479 is a binding site for heme.

It belongs to the cytochrome P450 family. Heme is required as a cofactor.

The protein localises to the mitochondrion membrane. This Drosophila melanogaster (Fruit fly) protein is Probable cytochrome P450 12b2, mitochondrial (Cyp12b2).